We begin with the raw amino-acid sequence, 143 residues long: Nuclear transcription factor Y subunit B-4 (143 aa).

The tract at residues 1–23 is disordered; that stretch reads MSEGFDGTENGGGGGGGGVGKEQ. The segment covering 9–20 has biased composition (gly residues); it reads ENGGGGGGGGVG. Residues 27–33 mediate DNA binding; it reads LPIANIG. The tract at residues 54-65 is subunit association domain (SAD); the sequence is VQECVSEFISFI. Over residues 117–130 the composition is skewed to basic and acidic residues; that stretch reads KGSRASELPVKKDV. Positions 117–143 are disordered; that stretch reads KGSRASELPVKKDVVLNGDPGSSFEGM.

The protein belongs to the NFYB/HAP3 subunit family. As to quaternary structure, heterotrimeric transcription factor composed of three components, NF-YA, NF-YB and NF-YC. NF-YB and NF-YC must interact and dimerize for NF-YA association and DNA binding. In terms of tissue distribution, ubiquitous.

The protein localises to the nucleus. In terms of biological role, component of the NF-Y/HAP transcription factor complex. The NF-Y complex stimulates the transcription of various genes by recognizing and binding to a CCAAT motif in promoters. May regulate the expression of photosynthetic genes, and may be involved in chloroplast and amyloplast development. In Oryza sativa subsp. japonica (Rice), this protein is Nuclear transcription factor Y subunit B-4 (NFYB4).